The following is a 240-amino-acid chain: Ribonuclease PH (240 aa).

Phosphate is bound by residues R86 and 124–126 (GTR).

This sequence belongs to the RNase PH family. As to quaternary structure, homohexameric ring arranged as a trimer of dimers.

The catalysed reaction is tRNA(n+1) + phosphate = tRNA(n) + a ribonucleoside 5'-diphosphate. In terms of biological role, phosphorolytic 3'-5' exoribonuclease that plays an important role in tRNA 3'-end maturation. Removes nucleotide residues following the 3'-CCA terminus of tRNAs; can also add nucleotides to the ends of RNA molecules by using nucleoside diphosphates as substrates, but this may not be physiologically important. Probably plays a role in initiation of 16S rRNA degradation (leading to ribosome degradation) during starvation. The sequence is that of Ribonuclease PH from Mannheimia succiniciproducens (strain KCTC 0769BP / MBEL55E).